A 452-amino-acid polypeptide reads, in one-letter code: Tripartite motif-containing protein 49C (452 aa).

The RING-type zinc-finger motif lies at C15–T56. The B box-type zinc-finger motif lies at S88 to I129. Zn(2+) contacts are provided by C93, H96, C115, and H121. In terms of domain architecture, B30.2/SPRY spans E269–F452.

The protein is Tripartite motif-containing protein 49C (TRIM49C) of Homo sapiens (Human).